Reading from the N-terminus, the 252-residue chain is NLP effector protein Pc118356 (252 aa).

The first 17 residues, 1-17 (MALTVLAATALTALIMG), serve as a signal peptide directing secretion. Residues N20 and N67 are each glycosylated (N-linked (GlcNAc...) asparagine). The short motif at 121–127 (QDRHFWE) is the Hepta-peptide GHRHDWE motif element. A glycan (N-linked (GlcNAc...) asparagine) is linked at N166.

It belongs to the Necrosis inducing protein (NPP1) family.

It localises to the secreted. Secreted effector that contributes strongly to virulence during infection by P.capsici. This is NLP effector protein Pc118356 from Phytophthora capsici.